Consider the following 309-residue polypeptide: Transcriptional regulator HilD (309 aa).

One can recognise an HTH araC/xylS-type domain in the interval 209–306; the sequence is ERVYNIISSS…KTTPSTFIKM (98 aa). 2 consecutive DNA-binding regions (H-T-H motif) follow at residues 226–247 and 273–296; these read TDVA…AEEG and VNAV…KKYF.

In Salmonella typhimurium (strain SL1344), this protein is Transcriptional regulator HilD (hilD).